Here is a 348-residue protein sequence, read N- to C-terminus: Putative agmatine deiminase (348 aa).

Cysteine 335 serves as the catalytic Amidino-cysteine intermediate.

It belongs to the agmatine deiminase family.

The enzyme catalyses agmatine + H2O = N-carbamoylputrescine + NH4(+). This chain is Putative agmatine deiminase, found in Legionella pneumophila subsp. pneumophila (strain Philadelphia 1 / ATCC 33152 / DSM 7513).